Reading from the N-terminus, the 522-residue chain is Maturase K (522 aa).

This sequence belongs to the intron maturase 2 family. MatK subfamily.

The protein localises to the plastid. It localises to the chloroplast. Its function is as follows. Usually encoded in the trnK tRNA gene intron. Probably assists in splicing its own and other chloroplast group II introns. The polypeptide is Maturase K (Iris tenax (Oregon iris)).